The chain runs to 261 residues: Triosephosphate isomerase (261 aa).

10-12 (NWK) is a substrate binding site. H100 acts as the Electrophile in catalysis. E172 acts as the Proton acceptor in catalysis. Residues G178, S218, and 239-240 (GG) each bind substrate.

Belongs to the triosephosphate isomerase family. In terms of assembly, homodimer.

The protein resides in the cytoplasm. It carries out the reaction D-glyceraldehyde 3-phosphate = dihydroxyacetone phosphate. The protein operates within carbohydrate biosynthesis; gluconeogenesis. It participates in carbohydrate degradation; glycolysis; D-glyceraldehyde 3-phosphate from glycerone phosphate: step 1/1. In terms of biological role, involved in the gluconeogenesis. Catalyzes stereospecifically the conversion of dihydroxyacetone phosphate (DHAP) to D-glyceraldehyde-3-phosphate (G3P). The sequence is that of Triosephosphate isomerase from Saccharopolyspora erythraea (strain ATCC 11635 / DSM 40517 / JCM 4748 / NBRC 13426 / NCIMB 8594 / NRRL 2338).